The primary structure comprises 98 residues: uncharacterized protein (98 aa).

The protein belongs to the HesB/IscA family.

This is an uncharacterized protein from Staphylococcus epidermidis (strain ATCC 35984 / DSM 28319 / BCRC 17069 / CCUG 31568 / BM 3577 / RP62A).